A 104-amino-acid chain; its full sequence is Large ribosomal subunit protein bL21 (104 aa).

This sequence belongs to the bacterial ribosomal protein bL21 family. As to quaternary structure, part of the 50S ribosomal subunit. Contacts protein L20.

Its function is as follows. This protein binds to 23S rRNA in the presence of protein L20. This chain is Large ribosomal subunit protein bL21, found in Endomicrobium trichonymphae.